A 726-amino-acid polypeptide reads, in one-letter code: WD repeat and coiled-coil-containing protein (726 aa).

WD repeat units follow at residues 55–98 (GQFE…LDKN) and 154–194 (KSSG…LNAC). The tract at residues 503-571 (SYDGDQSPTS…SSPPNFIKHG (69 aa)) is disordered. Residues 506-515 (GDQSPTSSAN) show a composition bias toward polar residues. Over residues 517 to 535 (FDDKRSKLRVESLDTEPKN) the composition is skewed to basic and acidic residues. Residues 550-565 (SRPTSPKSECQKSSPP) are compositionally biased toward polar residues. The stretch at 581-609 (SISRNVERLCCNFAHLQQHLSELTDITRN) forms a coiled coil.

This Xenopus tropicalis (Western clawed frog) protein is WD repeat and coiled-coil-containing protein (wdcp).